A 156-amino-acid polypeptide reads, in one-letter code: 6,7-dimethyl-8-ribityllumazine synthase (156 aa).

5-amino-6-(D-ribitylamino)uracil is bound by residues phenylalanine 22, 57 to 59, and 81 to 83; these read AYE and TVI. 86 to 87 contacts (2S)-2-hydroxy-3-oxobutyl phosphate; it reads GT. Catalysis depends on histidine 89, which acts as the Proton donor. Phenylalanine 114 serves as a coordination point for 5-amino-6-(D-ribitylamino)uracil. Residue arginine 128 participates in (2S)-2-hydroxy-3-oxobutyl phosphate binding.

The protein belongs to the DMRL synthase family. Forms an icosahedral capsid composed of 60 subunits, arranged as a dodecamer of pentamers.

The enzyme catalyses (2S)-2-hydroxy-3-oxobutyl phosphate + 5-amino-6-(D-ribitylamino)uracil = 6,7-dimethyl-8-(1-D-ribityl)lumazine + phosphate + 2 H2O + H(+). Its pathway is cofactor biosynthesis; riboflavin biosynthesis; riboflavin from 2-hydroxy-3-oxobutyl phosphate and 5-amino-6-(D-ribitylamino)uracil: step 1/2. Its function is as follows. Catalyzes the formation of 6,7-dimethyl-8-ribityllumazine by condensation of 5-amino-6-(D-ribitylamino)uracil with 3,4-dihydroxy-2-butanone 4-phosphate. This is the penultimate step in the biosynthesis of riboflavin. In Cronobacter sakazakii (strain ATCC BAA-894) (Enterobacter sakazakii), this protein is 6,7-dimethyl-8-ribityllumazine synthase.